A 121-amino-acid polypeptide reads, in one-letter code: UPF0102 protein BDI_2565 (121 aa).

The protein belongs to the UPF0102 family.

This is UPF0102 protein BDI_2565 from Parabacteroides distasonis (strain ATCC 8503 / DSM 20701 / CIP 104284 / JCM 5825 / NCTC 11152).